We begin with the raw amino-acid sequence, 295 residues long: MIVIDGKKVSLELKNELRERVEALNAKCGKVPGLTVIIVGEDPASQVYVRNKAKSCKEIGMNSTVIELPADTTQEHLLKIINDLNNDDTVHGILVQQPMPKQIDEFTITLAIDPAKDVDGFHPENLGRLVMGHLDKCFVSCTPYGILELLGRYNIETKGKHCVVVGRSNIVGKPMANLMLQKLKESNCTVTICHSATPNITEFTKQADILIAAIGKANFITADMVKAGAVVIDVGINRVDDASAKNGYRLVGDVEYAGVSALASAITPVPGGVGPMTIAMLLKNTVQSFQRVNGL.

NADP(+) is bound by residues 166–168 (GRS), Ser-195, and Ile-236.

Belongs to the tetrahydrofolate dehydrogenase/cyclohydrolase family. As to quaternary structure, homodimer.

The enzyme catalyses (6R)-5,10-methylene-5,6,7,8-tetrahydrofolate + NADP(+) = (6R)-5,10-methenyltetrahydrofolate + NADPH. It catalyses the reaction (6R)-5,10-methenyltetrahydrofolate + H2O = (6R)-10-formyltetrahydrofolate + H(+). Its pathway is one-carbon metabolism; tetrahydrofolate interconversion. Catalyzes the oxidation of 5,10-methylenetetrahydrofolate to 5,10-methenyltetrahydrofolate and then the hydrolysis of 5,10-methenyltetrahydrofolate to 10-formyltetrahydrofolate. This is Bifunctional protein FolD from Chlorobium chlorochromatii (strain CaD3).